We begin with the raw amino-acid sequence, 457 residues long: Argininosuccinate lyase (457 aa).

Belongs to the lyase 1 family. Argininosuccinate lyase subfamily.

It is found in the cytoplasm. The catalysed reaction is 2-(N(omega)-L-arginino)succinate = fumarate + L-arginine. It participates in amino-acid biosynthesis; L-arginine biosynthesis; L-arginine from L-ornithine and carbamoyl phosphate: step 3/3. The sequence is that of Argininosuccinate lyase from Yersinia pseudotuberculosis serotype O:1b (strain IP 31758).